Reading from the N-terminus, the 143-residue chain is Insulin-like growth factor 1 (143 aa).

An N-terminal signal peptide occupies residues 1–32 (MITPTVKMRILSSSHLFYLALCLLTFTSSATA). The b stretch occupies residues 33-61 (GPETLCGAELVDALQFVCGDRGFYFNKPT). Cystine bridges form between Cys-38–Cys-80, Cys-50–Cys-93, and Cys-79–Cys-84. The segment at 62–73 (GYGSSSRRAPQT) is c. The interval 74–94 (GIVDECCFRSCDLRRLEMYCA) is a. The interval 95-102 (PLKPAKAA) is d. Positions 99-143 (AKAARSVRAQRHTDMPKTQKYQPPSTNKKMKSQRRRKGSTFEEHK) are disordered. Residues 103 to 143 (RSVRAQRHTDMPKTQKYQPPSTNKKMKSQRRRKGSTFEEHK) constitute a propeptide, e peptide. The span at 126–136 (KKMKSQRRRKG) shows a compositional bias: basic residues.

It belongs to the insulin family. Forms a ternary complex with IGFR1 and ITGAV:ITGB3. Forms a ternary complex with IGFR1 and ITGA6:ITGB4. Forms a ternary complex with IGFBP3 and ALS.

The protein resides in the secreted. The insulin-like growth factors, isolated from plasma, are structurally and functionally related to insulin but have a much higher growth-promoting activity. May be a physiological regulator of [1-14C]-2-deoxy-D-glucose (2DG) transport and glycogen synthesis in osteoblasts. Stimulates glucose transport in bone-derived osteoblastic (PyMS) cells and is effective at much lower concentrations than insulin, not only regarding glycogen and DNA synthesis but also with regard to enhancing glucose uptake. May play a role in synapse maturation. Ca(2+)-dependent exocytosis of IGF1 is required for sensory perception of smell in the olfactory bulb. Acts as a ligand for IGF1R. Binds to the alpha subunit of IGF1R, leading to the activation of the intrinsic tyrosine kinase activity which autophosphorylates tyrosine residues in the beta subunit thus initiating a cascade of down-stream signaling events leading to activation of the PI3K-AKT/PKB and the Ras-MAPK pathways. Binds to integrins ITGAV:ITGB3 and ITGA6:ITGB4. Its binding to integrins and subsequent ternary complex formation with integrins and IGFR1 are essential for IGF1 signaling. Induces the phosphorylation and activation of IGFR1, MAPK3/ERK1, MAPK1/ERK2 and AKT1. As part of the MAPK/ERK signaling pathway, acts as a negative regulator of apoptosis in cardiomyocytes via promotion of STUB1/CHIP-mediated ubiquitination and degradation of ICER-type isoforms of CREM. The protein is Insulin-like growth factor 1 of Oryctolagus cuniculus (Rabbit).